We begin with the raw amino-acid sequence, 932 residues long: RNA-binding protein 12 (932 aa).

Residues 97–116 are disordered; it reads IPPANASRSGPPPSSGMSGR. Positions 98–116 are enriched in low complexity; it reads PPANASRSGPPPSSGMSGR. The 76-residue stretch at 304-379 folds into the RRM 1 domain; the sequence is LYVSVHGMPF…RYVEVSPATE (76 aa). Phosphoserine is present on residues serine 352 and serine 375. Positions 393 to 424 are disordered; the sequence is QNMGPSGQSHPPPQTLPRSKSPSGQKRSRSRS. The segment covering 408–417 has biased composition (polar residues); that stretch reads LPRSKSPSGQ. 3 positions are modified to phosphoserine: serine 420, serine 422, and serine 424. An RRM 2 domain is found at 430–507; the sequence is FCVYLKGLPF…RFIQVHPITK (78 aa). Position 525 is a phosphoserine (serine 525). Positions 717–734 are enriched in low complexity; the sequence is NGPPFNFPGNFGGSNAFG. The interval 717–853 is disordered; sequence NGPPFNFPGN…PGFASSSGKP (137 aa). The span at 783-811 shows a compositional bias: gly residues; it reads SGFGGGPQNFGNGPGSLGGPPGFGSGPPG. Residues 824–836 are compositionally biased toward pro residues; it reads AFGPGPGPGPGPG. Residues 856 to 932 enclose the RRM 3 domain; the sequence is TVIKVQNMPF…GSRKVKLVLG (77 aa).

The protein localises to the nucleus. This is RNA-binding protein 12 (RBM12) from Macaca mulatta (Rhesus macaque).